The primary structure comprises 273 residues: tRNA (guanine-N(7)-)-methyltransferase (273 aa).

Residues 1 to 31 (MSQHPDINTNVDATSLTDDQKSLDTNATSGN) show a composition bias toward polar residues. Residues 1–36 (MSQHPDINTNVDATSLTDDQKSLDTNATSGNEVAPD) form a disordered region. The S-adenosyl-L-methionine site is built by E105, E130, D157, and D179. Residue D179 is part of the active site. Residues K183, D215, and 252–255 (TKFE) contribute to the substrate site.

It belongs to the class I-like SAM-binding methyltransferase superfamily. TrmB family.

It carries out the reaction guanosine(46) in tRNA + S-adenosyl-L-methionine = N(7)-methylguanosine(46) in tRNA + S-adenosyl-L-homocysteine. The protein operates within tRNA modification; N(7)-methylguanine-tRNA biosynthesis. Catalyzes the formation of N(7)-methylguanine at position 46 (m7G46) in tRNA. This is tRNA (guanine-N(7)-)-methyltransferase from Psychrobacter cryohalolentis (strain ATCC BAA-1226 / DSM 17306 / VKM B-2378 / K5).